The primary structure comprises 431 residues: Na(+)/H(+) antiporter NhaA (431 aa).

11 helical membrane passes run 33–53 (VGGALLLVAALAALVWANSPW), 74–94 (LSISAWAADGLLAIFFFVVGV), 112–132 (ALPIAAAVGGMIVPAVIFVGV), 144–164 (GWAIPVATDIAFALAVLAVIA), 173–193 (IFLLTLAVVDDLLAIIVIAVF), 197–217 (QLSFGPLAGALVTIAVFGLAV), 225–245 (FLLLPLAVVAWALMHASGVHA), 279–299 (FAVPVFAFFAAGVTVGGLSGF), 311–331 (VIAGLVLGKPIGVFLTTYVLA), 347–367 (VLGLALLAGIGFTVSLLIGEL), and 379–399 (AKIAVLTGSVLAGLLAAVVLL).

This sequence belongs to the NhaA Na(+)/H(+) (TC 2.A.33) antiporter family.

The protein localises to the cell membrane. The catalysed reaction is Na(+)(in) + 2 H(+)(out) = Na(+)(out) + 2 H(+)(in). Functionally, na(+)/H(+) antiporter that extrudes sodium in exchange for external protons. The sequence is that of Na(+)/H(+) antiporter NhaA from Mycolicibacterium smegmatis (strain ATCC 700084 / mc(2)155) (Mycobacterium smegmatis).